Here is a 290-residue protein sequence, read N- to C-terminus: ATP synthase gamma chain (290 aa).

It belongs to the ATPase gamma chain family. F-type ATPases have 2 components, CF(1) - the catalytic core - and CF(0) - the membrane proton channel. CF(1) has five subunits: alpha(3), beta(3), gamma(1), delta(1), epsilon(1). CF(0) has three main subunits: a, b and c.

It localises to the cell membrane. In terms of biological role, produces ATP from ADP in the presence of a proton gradient across the membrane. The gamma chain is believed to be important in regulating ATPase activity and the flow of protons through the CF(0) complex. In Wolbachia pipientis subsp. Culex pipiens (strain wPip), this protein is ATP synthase gamma chain.